A 458-amino-acid polypeptide reads, in one-letter code: MSTPPSSLIFTVSRLNKTVRELLEGEMGQIWLTGEISNFSQPASGHWYFTLKDDRAQVRCAMFRNTNRRTTFAPRNGQQVLVRASLTLYEPRGDYQLIAESMQPAGDGLLQQQFEQLKQQLSDEGLFSQQFKQPLPSPARRVGVITSASGAALHDILQVLQRRDPSLPVVIYPTAVQGQEAPAQILRALEAANRRAECDVLIVGRGGGSLEDLASFNDERVARAIFASRLPVVSAVGHETDVTIADFVADLRAPTPSAAAELVSRNQLELLRQLQSQQQRLEMAMDYFLAQRQQRYSRLQHRLQQQHPQLRLARQHTALMTLRRRLDDGVQGQLRQAQRRHDYVRQRMVQQAPAARINRAQQRLQALRYQLSQGISLRVNRQNNAFVALCSRLEGMSPLKTLARGFSVTTDSHGAVVKQTRQLSAGDRLTTRLRDGWVESQVTEITRQPARRPRRSQD.

It belongs to the XseA family. In terms of assembly, heterooligomer composed of large and small subunits.

The protein resides in the cytoplasm. It catalyses the reaction Exonucleolytic cleavage in either 5'- to 3'- or 3'- to 5'-direction to yield nucleoside 5'-phosphates.. Bidirectionally degrades single-stranded DNA into large acid-insoluble oligonucleotides, which are then degraded further into small acid-soluble oligonucleotides. The polypeptide is Exodeoxyribonuclease 7 large subunit (Sodalis glossinidius (strain morsitans)).